A 249-amino-acid chain; its full sequence is Enolase-phosphatase E1 (249 aa).

The protein belongs to the HAD-like hydrolase superfamily. MasA/MtnC family. Monomer. Mg(2+) serves as cofactor.

It carries out the reaction 5-methylsulfanyl-2,3-dioxopentyl phosphate + H2O = 1,2-dihydroxy-5-(methylsulfanyl)pent-1-en-3-one + phosphate. It participates in amino-acid biosynthesis; L-methionine biosynthesis via salvage pathway; L-methionine from S-methyl-5-thio-alpha-D-ribose 1-phosphate: step 3/6. It functions in the pathway amino-acid biosynthesis; L-methionine biosynthesis via salvage pathway; L-methionine from S-methyl-5-thio-alpha-D-ribose 1-phosphate: step 4/6. Bifunctional enzyme that catalyzes the enolization of 2,3-diketo-5-methylthiopentyl-1-phosphate (DK-MTP-1-P) into the intermediate 2-hydroxy-3-keto-5-methylthiopentenyl-1-phosphate (HK-MTPenyl-1-P), which is then dephosphorylated to form the acireductone 1,2-dihydroxy-3-keto-5-methylthiopentene (DHK-MTPene). This is Enolase-phosphatase E1 from Synechococcus sp. (strain CC9605).